A 554-amino-acid polypeptide reads, in one-letter code: MEFPASVASLSANTVGSNDVLRRSIAYHPNIWGDFFLAHTSEFMEISIAEKEEHERLKEEIKKLLVQTEYDSILKLELIDSIQRLGVGYHFEKEIDRILRYVHQTYPIYDTENKDLRMLALRFRLLRQQGFHVPFDVLSEFIDAEGNLTESIAYDIQGILSLYEASNYGVLGEEILDKALDSCSSRLESLITDTDDDRLSRQVKEALKIPISKTLTRLGARKFISMYKEDDSHNEKLLKFAMLDFNMVQRLHQNELSHLTRWWKELDFANKLPFARDRLVECYFWIMGVYYEPRHEIARKILTKVIYMASVLDDIYDVYGTLDELTLFTSFVRRWDISGIDELPTYMRIYLRALFDVYVEMEEEMGKIGKSYAIEYAKEEMKRLAEVYFQEAQWFFSKYKPTMQEYMKVALLSSGYMMMTINSLAVIKDPITKKEFDWVVSEPPILKSSSIITRLMDDLAGYGSEEKHSAVHLYMNEKGVSEEEAFQELRKQVKNSWKNINKECLKLRPASVPILTTVVNFTRVIIVLYTDEDAYGNSKTKTKDMIKSILVDPV.

Positions 313 and 317 each coordinate Mn(2+). The short motif at 313 to 317 is the DDXXD motif element; sequence DDIYD. Homodimerization stretches follow at residues 319–325 and 391–427; these read YGTLDEL and EAQWFFSKYKPTMQEYMKVALLSSGYMMMTINSLAVI. Mn(2+) contacts are provided by aspartate 457 and glutamate 465.

The protein belongs to the terpene synthase family. In terms of assembly, homodimer. It depends on Mn(2+) as a cofactor. Requires Mg(2+) as cofactor. In terms of tissue distribution, expressed in peltate glandular trichomes. Present at low levels in flowers, leaves and stems.

The catalysed reaction is (2E,6E)-farnesyl diphosphate = (-)-(E)-beta-caryophyllene + diphosphate. It carries out the reaction (2E,6E)-farnesyl diphosphate = alpha-humulene + diphosphate. It functions in the pathway secondary metabolite biosynthesis; terpenoid biosynthesis. In terms of biological role, involved in the biosynthesis of phenolic sesquiterpenes natural products. Sesquiterpene synthase converting (2E,6E)-farnesyl diphosphate (FPP) to (E)-beta-caryophyllene and alpha-humulene. In Origanum vulgare (Wild marjoram), this protein is (E)-beta-caryophyllene synthase.